Consider the following 200-residue polypeptide: Glycerol-3-phosphate acyltransferase (200 aa).

Helical transmembrane passes span 9-29, 54-74, 81-101, 112-132, 140-160, and 165-185; these read IIIG…AYFW, VPGM…VLLA, DIAV…PLWL, GAGA…LVWL, YVSL…ALLN, and YLIF…SNIG.

This sequence belongs to the PlsY family. Probably interacts with PlsX.

The protein localises to the cell membrane. It carries out the reaction an acyl phosphate + sn-glycerol 3-phosphate = a 1-acyl-sn-glycero-3-phosphate + phosphate. Its pathway is lipid metabolism; phospholipid metabolism. Catalyzes the transfer of an acyl group from acyl-phosphate (acyl-PO(4)) to glycerol-3-phosphate (G3P) to form lysophosphatidic acid (LPA). This enzyme utilizes acyl-phosphate as fatty acyl donor, but not acyl-CoA or acyl-ACP. This chain is Glycerol-3-phosphate acyltransferase, found in Desulforamulus reducens (strain ATCC BAA-1160 / DSM 100696 / MI-1) (Desulfotomaculum reducens).